The following is a 1291-amino-acid chain: DNA-directed RNA polymerase subunit beta' (1291 aa).

Cys-60, Cys-62, Cys-75, and Cys-78 together coordinate Zn(2+). The Mg(2+) site is built by Asp-535, Asp-537, and Asp-539. Cys-874, Cys-951, Cys-958, and Cys-961 together coordinate Zn(2+).

This sequence belongs to the RNA polymerase beta' chain family. The RNAP catalytic core consists of 2 alpha, 1 beta, 1 beta' and 1 omega subunit. When a sigma factor is associated with the core the holoenzyme is formed, which can initiate transcription. Mg(2+) serves as cofactor. Zn(2+) is required as a cofactor.

The catalysed reaction is RNA(n) + a ribonucleoside 5'-triphosphate = RNA(n+1) + diphosphate. Its function is as follows. DNA-dependent RNA polymerase catalyzes the transcription of DNA into RNA using the four ribonucleoside triphosphates as substrates. The chain is DNA-directed RNA polymerase subunit beta' from Leifsonia xyli subsp. xyli (strain CTCB07).